The following is a 449-amino-acid chain: Trigger factor (449 aa).

The region spanning 162–243 (GEFVTINITA…ITATKQRELP (82 aa)) is the PPIase FKBP-type domain. The span at 428–437 (GNEIDPKEYF) shows a compositional bias: basic and acidic residues. Positions 428–449 (GNEIDPKEYFGEEEVAETESEA) are disordered. A compositionally biased stretch (acidic residues) spans 438–449 (GEEEVAETESEA).

The protein belongs to the FKBP-type PPIase family. Tig subfamily.

It localises to the cytoplasm. It carries out the reaction [protein]-peptidylproline (omega=180) = [protein]-peptidylproline (omega=0). Involved in protein export. Acts as a chaperone by maintaining the newly synthesized protein in an open conformation. Functions as a peptidyl-prolyl cis-trans isomerase. The sequence is that of Trigger factor from Corynebacterium glutamicum (strain R).